The primary structure comprises 201 residues: Sorting nexin-10 (201 aa).

The tract at residues 8–125 (EEFVSVWVRD…SLHLFLQSHL (118 aa)) is required for interaction with ATP6V1D. A PX domain is found at 10-127 (FVSVWVRDPR…HLFLQSHLNS (118 aa)). Positions 53, 79, and 94 each coordinate a 1,2-diacyl-sn-glycero-3-phospho-(1D-myo-inositol-3-phosphate). Residues 156-201 (FPEEDEEGKKENDIDYDSESSSSGLGHSSDDSSSHGCKVNTAPQES) form a disordered region.

The protein belongs to the sorting nexin family. As to quaternary structure, interacts with ATP6V1D; may play a role in ciliogenesis.

It localises to the cytoplasm. The protein localises to the endosome membrane. It is found in the cytoskeleton. Its subcellular location is the microtubule organizing center. The protein resides in the centrosome. Functionally, probable phosphoinositide-binding protein involved in protein sorting and membrane trafficking in endosomes. Plays a role in cilium biogenesis through regulation of the transport and the localization of proteins to the cilium. Required for the localization to the cilium of V-ATPase subunit ATP6V1D and ATP6V0D1, and RAB8A. Involved in osteoclast differentiation and therefore bone resorption. The protein is Sorting nexin-10 (SNX10) of Homo sapiens (Human).